Reading from the N-terminus, the 868-residue chain is MLKSAIVSIVRASTRFAAFTVLIGVFLAVAAGFYTYQHFGINTDINHLISSDLDWRKRDIAFEKAFDQERLILAVVEAPTPEFANAAAAKLTAELSKNNINFDSVKRLGGGPFFDRSGLLFLPKDEVAKATGQFQQAVPLIEIMAGDPSIRGLTAALETGLVGLKRGELTLDATAKPFNTVAATVEDVLGKQQAFFSWRGLVNPEPLTDGDKRAFIEVKPILDFKALEPGKAATDAIRQAAVDLKIEQDFGARVRLTGPVPIANEEFATVKDGAVVNGIGTVVVVLLILWMALHSSKIIFAVAANLVIGLSITTAVGLMLVDSLNLLSIAFAVLFVGLGVDFGIQFSVRYRSERHKTGDLEKALVQAAEYSAVPLSLAAMSTTAGFLSFLPTSYKGISELGEIAGAGMAIAFFTSITVLPALLKLLNPAGEKEPLGYAFLAPVDHFLEKHRIAIIVGTIGVALAGLPLLYFMHFDFNPINLRSPKVESIATFLDLRKDPNTGANAVNVMAPNEQAAREIEAKLAKLPQVSRTISLDTFVPPDQPEKLKLIQAGAKVLEPALNPEQIDPPPSDQDNIASLKSSAEALRRAAGEATGPGADASRRLATALTKLAGADQAMREKAQDVFVRPLLLDFELLRNMLKAQPVTLDNLPADIVSSWKTKDGQIRVEVLPSGDPNDNDTLRKFAAAVLQAEPLATGGPVSILKSGDTIVASFIQAGLWALLSISILLWITLRRISDVALTLVPLLVAGAVTLEICVLIDLPLNFANIVALPLLLGVGVAFKIYYVTAWRSGRTNLLQSALTRAIFFSALTTATAFGSLWLSSHPGTASMGKLLALSLLTTLGAVLLFQPALMGKPRHIDESGDTDL.

Helical transmembrane passes span 16–36 (FAAF…FYTY), 273–293 (GAVV…WMAL), 298–318 (IIFA…AVGL), 326–346 (LLSI…GIQF), 370–390 (YSAV…LSFL), 403–423 (IAGA…PALL), 452–472 (IAII…LYFM), 710–730 (IVAS…ILLW), 740–760 (ALTL…CVLI), 762–782 (LPLN…GVAF), 805–825 (AIFF…LSSH), and 834–854 (LLAL…PALM). The 127-residue stretch at 299-425 (IFAVAANLVI…ITVLPALLKL (127 aa)) folds into the SSD domain.

Belongs to the resistance-nodulation-cell division (RND) (TC 2.A.6) family. MmpL subfamily.

The protein resides in the cell inner membrane. Essential for hopanoid transport from the cytoplasmic to the outer membrane. Required for the C(35) hopanoid, bacteriohopanetetrol, to remain localized to the mother cell type. This Rhodopseudomonas palustris (strain TIE-1) protein is Hopanoid transporter HpnN.